The sequence spans 65 residues: UPF0291 protein BBR47_33060 (65 aa).

This sequence belongs to the UPF0291 family.

It is found in the cytoplasm. In Brevibacillus brevis (strain 47 / JCM 6285 / NBRC 100599), this protein is UPF0291 protein BBR47_33060.